Reading from the N-terminus, the 363-residue chain is Putative F-box protein At4g22170 (363 aa).

Positions 7–58 (PNSWSDLPHDLLNLVFERLSFANFNRARSVCSSWYSASRQSVPKNQIHWLIL) constitute an F-box domain.

In Arabidopsis thaliana (Mouse-ear cress), this protein is Putative F-box protein At4g22170.